Consider the following 222-residue polypeptide: Collectrin (222 aa).

An N-terminal signal peptide occupies residues 1-14 (MLWLLFFLVTAIHA). Residues 15–141 (ELCQPGAENA…LAPPMDPSVP (127 aa)) lie on the Extracellular side of the membrane. The 202-residue stretch at 21–222 (AENAFKVRLS…MTEDERLTPL (202 aa)) folds into the Collectrin-like domain. Residues N76 and N93 are each glycosylated (N-linked (GlcNAc...) asparagine). A helical transmembrane segment spans residues 142 to 162 (IWIIIFGVIFCIIIVAIALLI). Topologically, residues 163–222 (LSGIWQRRRKNKEPSEVDDAEDKCENMITIENGIPSDPLDMKGGHINDAFMTEDERLTPL) are cytoplasmic. 2 positions are modified to phosphothreonine: T214 and T220.

This sequence belongs to the CLTRN family. As to quaternary structure, monomer. Homodimer; dimerization prevents CLTRN cleavage by BACE2. Interacts with SLC6A18; this interaction regulates the trafficking of SLC6A18 to the cell membrane and its amino acid transporter activity. Interacts with SLC6A19; this interaction regulates the trafficking of SLC6A19 to the cell membrane and its amino acid transporter activity. Interacts with SNAPIN. Post-translationally, glycosylated. Glycosylation is required for plasma membrane localization and for its cleavage by BACE2. Proteolytically processed in pancreatic beta cells by BACE2 leading to the generation and extracellular release of soluble CLTRN, and a corresponding cell-associated C-terminal fragment which is later cleaved by gamma-secretase. This shedding process inactivates CLTRN. Three cleavage sites have been identified for BACE2, two clustered sites after Phe-116 and Leu-118 and a more membrane proximal site at Phe-125; the preferred BACE2 cleavage site seems to be between Phe-125 and Leu-126, Phe-116 and Leu-118 act as alternative sites. As to expression, kidney; collecting ducts. Pancreas; beta cells of islets.

It localises to the cell membrane. Plays an important role in amino acid transport by acting as binding partner of amino acid transporters SLC6A18 and SLC6A19, regulating their trafficking on the cell surface and their amino acid transporter activity. May also play a role in trafficking of amino acid transporters SLC3A1 and SLC7A9 to the renal cortical cell membrane. Regulator of SNARE complex function. Stimulator of beta cell replication. The polypeptide is Collectrin (Homo sapiens (Human)).